A 125-amino-acid polypeptide reads, in one-letter code: Small ribosomal subunit protein uS12m (125 aa).

The tract at residues 1 to 27 (MPTKNQLIRHGREEKRRTDRTRALDQC) is disordered. Residues 10-23 (HGREEKRRTDRTRA) show a composition bias toward basic and acidic residues.

It belongs to the universal ribosomal protein uS12 family.

The protein resides in the mitochondrion. Functionally, protein S12 is involved in the translation initiation step. This chain is Small ribosomal subunit protein uS12m (RPS12), found in Triticum aestivum (Wheat).